The sequence spans 324 residues: tRNA U34 carboxymethyltransferase (324 aa).

Carboxy-S-adenosyl-L-methionine is bound by residues K92, W106, K111, G131, 153–155 (DPT), 182–183 (IE), M197, Y201, and R316.

This sequence belongs to the class I-like SAM-binding methyltransferase superfamily. CmoB family. Homotetramer.

The catalysed reaction is carboxy-S-adenosyl-L-methionine + 5-hydroxyuridine(34) in tRNA = 5-carboxymethoxyuridine(34) in tRNA + S-adenosyl-L-homocysteine + H(+). In terms of biological role, catalyzes carboxymethyl transfer from carboxy-S-adenosyl-L-methionine (Cx-SAM) to 5-hydroxyuridine (ho5U) to form 5-carboxymethoxyuridine (cmo5U) at position 34 in tRNAs. This is tRNA U34 carboxymethyltransferase from Proteus mirabilis (strain HI4320).